A 274-amino-acid polypeptide reads, in one-letter code: Pyrroline-5-carboxylate reductase 3 (274 aa).

Residue A2 is modified to N-acetylalanine.

The protein belongs to the pyrroline-5-carboxylate reductase family. In terms of assembly, homodecamer; composed of 5 homodimers.

The protein localises to the cytoplasm. It carries out the reaction L-proline + NADP(+) = (S)-1-pyrroline-5-carboxylate + NADPH + 2 H(+). The catalysed reaction is L-proline + NAD(+) = (S)-1-pyrroline-5-carboxylate + NADH + 2 H(+). It functions in the pathway amino-acid biosynthesis; L-proline biosynthesis; L-proline from L-glutamate 5-semialdehyde: step 1/1. Functionally, oxidoreductase that catalyzes the last step in proline biosynthesis, which corresponds to the reduction of pyrroline-5-carboxylate (P5C) to L-proline using NAD(P)H. Proline is synthesized from either glutamate or ornithine; both are converted to P5C, and then to proline via pyrroline-5-carboxylate reductases (PYCRs). PYCR3 is exclusively linked to the biosynthesis of proline from ornithine. In Macaca fascicularis (Crab-eating macaque), this protein is Pyrroline-5-carboxylate reductase 3.